A 659-amino-acid polypeptide reads, in one-letter code: Nicastrin (659 aa).

The N-terminal stretch at 1-22 (MKIKNYFIIVFIIIVLSTDVIS) is a signal peptide. The Extracellular segment spans residues 23–627 (SQSSIEDKMY…LFQVGSYANE (605 aa)). Residues Asn94, Asn172, Asn305, Asn389, Asn451, Asn475, Asn550, Asn553, and Asn600 are each glycosylated (N-linked (GlcNAc...) asparagine). The helical transmembrane segment at 628–648 (IWFLVSGLIELLLSVGIIFYI) threads the bilayer. Topologically, residues 649 to 659 (KKYLSKRYKLL) are cytoplasmic.

The protein belongs to the nicastrin family. Homodimer. Component of the gamma-secretase complex, a complex composed of a presenilin homodimer, nicastrin, aph1 and pen2.

It localises to the membrane. Its function is as follows. Essential subunit of the gamma-secretase complex, an endoprotease complex that catalyzes the intramembrane cleavage of integral membrane proteins such as Notch receptors and APP (amyloid-beta precursor protein). It probably represents a stabilizing cofactor required for the assembly of the gamma-secretase complex. This chain is Nicastrin (ncstn), found in Dictyostelium discoideum (Social amoeba).